We begin with the raw amino-acid sequence, 301 residues long: tRNA dimethylallyltransferase (301 aa).

Residue 10-17 (GATATGKT) coordinates ATP. Substrate is bound at residue 12-17 (TATGKT). Positions 35–38 (DSRQ) are interaction with substrate tRNA.

This sequence belongs to the IPP transferase family. In terms of assembly, monomer. The cofactor is Mg(2+).

It carries out the reaction adenosine(37) in tRNA + dimethylallyl diphosphate = N(6)-dimethylallyladenosine(37) in tRNA + diphosphate. Functionally, catalyzes the transfer of a dimethylallyl group onto the adenine at position 37 in tRNAs that read codons beginning with uridine, leading to the formation of N6-(dimethylallyl)adenosine (i(6)A). The protein is tRNA dimethylallyltransferase of Crocosphaera subtropica (strain ATCC 51142 / BH68) (Cyanothece sp. (strain ATCC 51142)).